Here is a 140-residue protein sequence, read N- to C-terminus: Nucleoside diphosphate kinase (140 aa).

ATP is bound by residues Lys-11, Phe-59, Arg-87, Thr-93, Arg-104, and Asn-114. His-117 acts as the Pros-phosphohistidine intermediate in catalysis.

It belongs to the NDK family. Homotetramer. It depends on Mg(2+) as a cofactor.

The protein localises to the cytoplasm. It catalyses the reaction a 2'-deoxyribonucleoside 5'-diphosphate + ATP = a 2'-deoxyribonucleoside 5'-triphosphate + ADP. It carries out the reaction a ribonucleoside 5'-diphosphate + ATP = a ribonucleoside 5'-triphosphate + ADP. Functionally, major role in the synthesis of nucleoside triphosphates other than ATP. The ATP gamma phosphate is transferred to the NDP beta phosphate via a ping-pong mechanism, using a phosphorylated active-site intermediate. In Novosphingobium aromaticivorans (strain ATCC 700278 / DSM 12444 / CCUG 56034 / CIP 105152 / NBRC 16084 / F199), this protein is Nucleoside diphosphate kinase.